The sequence spans 79 residues: Sec-independent protein translocase protein TatA (79 aa).

Residues 1 to 21 (MGGISIWQLLIILVIVVLLFG) form a helical membrane-spanning segment. Residues 45–79 (EEEKDADFEQKKQVEEKSAAEPVSTETQSDVKEKS) are disordered. Basic and acidic residues predominate over residues 51 to 63 (DFEQKKQVEEKSA).

The protein belongs to the TatA/E family. As to quaternary structure, the Tat system comprises two distinct complexes: a TatABC complex, containing multiple copies of TatA, TatB and TatC subunits, and a separate TatA complex, containing only TatA subunits. Substrates initially bind to the TatABC complex, which probably triggers association of the separate TatA complex to form the active translocon.

Its subcellular location is the cell inner membrane. Part of the twin-arginine translocation (Tat) system that transports large folded proteins containing a characteristic twin-arginine motif in their signal peptide across membranes. TatA could form the protein-conducting channel of the Tat system. This chain is Sec-independent protein translocase protein TatA, found in Alteromonas mediterranea (strain DSM 17117 / CIP 110805 / LMG 28347 / Deep ecotype).